The following is a 380-amino-acid chain: MPIDPVALTADLVRCPSVTPEEGGALDLIERILSGAGFDCTRVDRNGVPNLFARWGRKGANRTFGFNGHTDVVPVGDAAAWTRDPFGGEIADGWLWGRGATDMKSGVAAFVAAAVDFVQETPPDGAVVLTITGDEEGDATDGTVALLDWMAAEGEAMSVCLVGEPTCPERLGEMMKIGRRGSMTAFFTARGVQGHSAYPHRAKNPVAALARLIDRLSSHDLDQGTEHFDASTLAVTTFDTGNPATNVIPALCRATVNIRFNDAHSGASLASWLEEEAARVTAETGVEIALSAKISGESFLTPPGELSELVARAVEAETGLRPEPSTSGGTSDARFVRAHCPVVEFGLVGKTMHQVDERVEVAQIEPLKAIYLRILKDYFA.

His-69 contributes to the Zn(2+) binding site. Asp-71 is a catalytic residue. Asp-102 serves as a coordination point for Zn(2+). Glu-135 (proton acceptor) is an active-site residue. Residues Glu-136, Glu-164, and His-353 each contribute to the Zn(2+) site.

It belongs to the peptidase M20A family. DapE subfamily. Homodimer. Zn(2+) is required as a cofactor. It depends on Co(2+) as a cofactor.

It catalyses the reaction N-succinyl-(2S,6S)-2,6-diaminopimelate + H2O = (2S,6S)-2,6-diaminopimelate + succinate. It participates in amino-acid biosynthesis; L-lysine biosynthesis via DAP pathway; LL-2,6-diaminopimelate from (S)-tetrahydrodipicolinate (succinylase route): step 3/3. Catalyzes the hydrolysis of N-succinyl-L,L-diaminopimelic acid (SDAP), forming succinate and LL-2,6-diaminopimelate (DAP), an intermediate involved in the bacterial biosynthesis of lysine and meso-diaminopimelic acid, an essential component of bacterial cell walls. The polypeptide is Succinyl-diaminopimelate desuccinylase (Cereibacter sphaeroides (strain ATCC 17029 / ATH 2.4.9) (Rhodobacter sphaeroides)).